The sequence spans 107 residues: L-amino-acid oxidase (107 aa).

Residue 35 to 38 (GPMR) participates in FAD binding. Substrate is bound by residues R38 and H49.

This sequence belongs to the flavin monoamine oxidase family. FIG1 subfamily. In terms of assembly, homodimer; non-covalently linked. It depends on FAD as a cofactor. In terms of processing, N-glycosylated. In terms of tissue distribution, expressed by the venom gland.

The protein resides in the secreted. It catalyses the reaction an L-alpha-amino acid + O2 + H2O = a 2-oxocarboxylate + H2O2 + NH4(+). It carries out the reaction L-leucine + O2 + H2O = 4-methyl-2-oxopentanoate + H2O2 + NH4(+). The catalysed reaction is L-phenylalanine + O2 + H2O = 3-phenylpyruvate + H2O2 + NH4(+). The enzyme catalyses L-tryptophan + O2 + H2O = indole-3-pyruvate + H2O2 + NH4(+). It catalyses the reaction L-methionine + O2 + H2O = 4-methylsulfanyl-2-oxobutanoate + H2O2 + NH4(+). It carries out the reaction L-isoleucine + O2 + H2O = (S)-3-methyl-2-oxopentanoate + H2O2 + NH4(+). The catalysed reaction is L-arginine + O2 + H2O = 5-guanidino-2-oxopentanoate + H2O2 + NH4(+). The enzyme catalyses L-histidine + O2 + H2O = 3-(imidazol-5-yl)pyruvate + H2O2 + NH4(+). Its function is as follows. Catalyzes an oxidative deamination of predominantly hydrophobic and aromatic L-amino acids, thus producing hydrogen peroxide that may contribute to the diverse toxic effects of this enzyme. Shows high activity on L-Met, moderate activity on L-Trp, L-Leu, L-His, L-Phe, L-Arg, L-Ile, low activity on L-Val, L-Glu, L-Lys, L-Gln, L-Asn, L-Tyr, L-Ala, and no activity on L-Asp, L-Ser, L-Pro, L-Gly, L-Thr and L-Cys. Shows antimicrobial activity inhibiting the growth of both Gram-negative and Gram-positive bacteria. Also inhibits platelet aggregation induced by ADP or collagen. Effects of snake L-amino oxidases on platelets are controversial, since they either induce aggregation or inhibit agonist-induced aggregation. These different effects are probably due to different experimental conditions. This protein may also induce hemorrhage, hemolysis, edema, apoptosis, and have antiparasitic activities. This Macrovipera lebetinus (Levantine viper) protein is L-amino-acid oxidase.